The primary structure comprises 413 residues: Phosphatidylcholine:ceramide cholinephosphotransferase 1 (413 aa).

The 64-residue stretch at 7–70 folds into the SAM domain; it reads WSPKKVADWL…LDMIETLKME (64 aa). Serine 8 is modified (phosphoserine). 5 helical membrane passes run 136-156, 184-204, 215-235, 276-296, and 304-324; these read FLAFLYALSCFVLTTVMISVV, FSICEINGMILVGLWLIQWLL, FFCIVGTLYLYRCITMYVTTL, MCGDYLYSGHTVMLTLTYLFI, and LWWYHWICWLLSVVGIFCILL. The active site involves histidine 285. At 325–413 the chain is on the cytoplasmic side; the sequence is AHDHYTVDVV…VKYSRLVNDT (89 aa). Catalysis depends on residues histidine 328 and aspartate 332.

It belongs to the sphingomyelin synthase family. Brain, heart, kidney, liver, muscle and stomach.

Its subcellular location is the golgi apparatus membrane. It carries out the reaction an N-acylsphing-4-enine + a 1,2-diacyl-sn-glycero-3-phosphocholine = a sphingomyelin + a 1,2-diacyl-sn-glycerol. It catalyses the reaction an N-acylsphinganine + a 1,2-diacyl-sn-glycero-3-phosphocholine = an N-acylsphinganine-1-phosphocholine + a 1,2-diacyl-sn-glycerol. The enzyme catalyses an N-acyl-(4R)-4-hydroxysphinganine + a 1,2-diacyl-sn-glycero-3-phosphocholine = an N-acyl-(4R)-4-hydroxysphinganine-phosphocholine + a 1,2-diacyl-sn-glycerol. The catalysed reaction is 1-(9Z-octadecenoyl)-2-acyl-sn-3-glycerol + a sphingomyelin = a 1-(9Z-octadecenoyl)-2-acyl-sn-glycero-3-phosphocholine + an N-acylsphing-4-enine. It carries out the reaction N-hexadecanoylsphinganine + a 1,2-diacyl-sn-glycero-3-phosphocholine = N-hexadecanoyl-sphinganine-1-phosphocholine + a 1,2-diacyl-sn-glycerol. It catalyses the reaction N-hexadecanoyl-(4R)-hydroxysphinganine + a 1,2-diacyl-sn-glycero-3-phosphocholine = N-hexadecanoyl-(4R)-hydroxysphinganine-phosphocholine + a 1,2-diacyl-sn-glycerol. The enzyme catalyses an N-acylsphing-4-enine + a 1,2-diacyl-sn-glycero-3-phosphoethanolamine = an N-acylsphing-4-enine 1-phosphoethanolamine + a 1,2-diacyl-sn-glycerol. The protein operates within sphingolipid metabolism. Inhibited by bacterial PC-phospholipase C inhibitor D609. In terms of biological role, major sphingomyelin synthase at the Golgi apparatus. Catalyzes the reversible transfer of phosphocholine moiety in sphingomyelin biosynthesis: in the forward reaction transfers phosphocholine head group of phosphatidylcholine (PC) on to ceramide (CER) to form ceramide phosphocholine (sphingomyelin, SM) and diacylglycerol (DAG) as by-product, and in the reverse reaction transfers phosphocholine from SM to DAG to form PC and CER. The direction of the reaction depends on the levels of CER and DAG in Golgi membranes. Converts the newly synthesized CER, that is transported from the endoplasmic reticulum to the trans-Golgi by the Cer transport protein (CERT), to SM. Can form a heteromeric complex with glucosylceramide synthase (GCS) increasing SMS activity and reducing glucosylceramide synthesis, a critical mechanism that controls the metabolic fate of CER in the Golgi. Does not use free phosphorylcholine or CDP-choline as donor. Can also transfer phosphoethanolamine head group of phosphatidylethanolamine (PE) on to CER to form ceramide phosphoethanolamine (CPE). Regulates receptor-mediated signal transduction via mitogenic DAG and proapoptotic CER, as well as via SM, a structural component of membrane rafts that serve as platforms for signal transduction and protein sorting. Plays a role in secretory transport via regulation of DAG pool at the Golgi apparatus and its downstream effects on PRKD1. In Homo sapiens (Human), this protein is Phosphatidylcholine:ceramide cholinephosphotransferase 1 (SGMS1).